A 386-amino-acid polypeptide reads, in one-letter code: 8-amino-7-oxononanoate synthase (386 aa).

Substrate contacts are provided by Arg22 and Arg29. Gly109–Tyr110 contacts pyridoxal 5'-phosphate. Residue His134 participates in substrate binding. Pyridoxal 5'-phosphate is bound by residues Ser182, Asp207–His210, and Thr237–Lys240. The residue at position 240 (Lys240) is an N6-(pyridoxal phosphate)lysine. Thr349 serves as a coordination point for substrate.

It belongs to the class-II pyridoxal-phosphate-dependent aminotransferase family. BioF subfamily. Homodimer. The cofactor is pyridoxal 5'-phosphate.

It carries out the reaction 6-carboxyhexanoyl-[ACP] + L-alanine + H(+) = (8S)-8-amino-7-oxononanoate + holo-[ACP] + CO2. It functions in the pathway cofactor biosynthesis; biotin biosynthesis. Catalyzes the decarboxylative condensation of pimeloyl-[acyl-carrier protein] and L-alanine to produce 8-amino-7-oxononanoate (AON), [acyl-carrier protein], and carbon dioxide. This Beijerinckia indica subsp. indica (strain ATCC 9039 / DSM 1715 / NCIMB 8712) protein is 8-amino-7-oxononanoate synthase.